We begin with the raw amino-acid sequence, 482 residues long: 7-deoxyloganetic acid glucosyl transferase (482 aa).

Residue histidine 22 is the Proton acceptor of the active site. Histidine 22 contributes to the an anthocyanidin binding site. The Charge relay role is filled by aspartate 127. UDP-alpha-D-glucose is bound by residues threonine 149, alanine 362, glutamine 364, histidine 379, tryptophan 382, asparagine 383, serine 384, and glutamate 387. Alanine 402 is an an anthocyanidin binding site. Positions 403 and 404 each coordinate UDP-alpha-D-glucose.

Belongs to the UDP-glycosyltransferase family. Expressed in the leaf internal phloem-associated parenchyma (IPAP) inside the mesophyll. Mostly observed in leaves, roots and stems, and, to a lower extent, in flowers.

Its subcellular location is the nucleus. It localises to the cytoplasm. It is found in the cytosol. The enzyme catalyses 7-deoxyloganetate + UDP-alpha-D-glucose = 7-deoxyloganate + UDP + H(+). The protein operates within alkaloid biosynthesis. Component of the seco-iridoid and derivatives monoterpenoid indole alkaloids (MIAs, e.g. vincristine, quinine, and strychnine) biosynthesis pathway. Catalyzes the glucosylation of 7-deoxyloganetic acid to form 7-deoxyloganic acid using UDP-glucose as the sugar donor. Inactive with loganetic acid, loganetin, iridodial, iridotrial, 8-OH-geraniol, jasmonic acid, gibberellic acid, indole acetic acid, salicylic acid, abscisic acid, zeatin and luteolin. This Catharanthus roseus (Madagascar periwinkle) protein is 7-deoxyloganetic acid glucosyl transferase.